Reading from the N-terminus, the 1486-residue chain is Alsin homolog (1486 aa).

3 RCC1 repeats span residues 147–201 (QGVV…MLVA), 256–307 (HTQL…ARTL), and 308–363 (DGRL…LLNA). MORN repeat units lie at residues 744–765 (CGTW…DGSV), 766–784 (YCGE…MVIP), 789–804 (YVGN…HGVY), 817–832 (YEGN…HGVM), 839–853 (YVGE…GYGV), and 863–884 (YMGM…NRGD). One can recognise a VPS9 domain in the interval 1333–1486 (SRKDEMYRQN…VTSRALQKIP (154 aa)).

In terms of tissue distribution, in the embryo, expressed in a wide range of tissues including the epidermis and the ventral nerve cord.

Its function is as follows. Has guanine nucleotide exchange factor (GEF) activity towards Rab5. Promotes the exchange of GDP to GTP, converting inactive GDP-bound Rab5 into its active GTP-bound form. The protein is Alsin homolog of Drosophila melanogaster (Fruit fly).